The sequence spans 98 residues: Biogenesis of lysosome-related organelles complex 1 subunit SNN1 (98 aa).

The stretch at 55–98 (MDEQELLQEEGSLKEELARVNQLKKRLDKLTELYAELARKCGAL) forms a coiled coil.

The protein belongs to the SNAPIN family. As to quaternary structure, component of the biogenesis of lysosome-related organelles complex-1 (BLOC-1).

Its subcellular location is the endosome. Component of the biogenesis of lysosome-related organelles complex-1 (BLOC-1), a complex involved in endosomal cargo sorting. This chain is Biogenesis of lysosome-related organelles complex 1 subunit SNN1 (SNN1), found in Eremothecium gossypii (strain ATCC 10895 / CBS 109.51 / FGSC 9923 / NRRL Y-1056) (Yeast).